Consider the following 822-residue polypeptide: Cation/H(+) antiporter 3 (822 aa).

Transmembrane regions (helical) follow at residues 55 to 75 (FPHL…LHFF), 116 to 136 (EIVF…LMGV), 150 to 170 (AITI…VIFF), 190 to 210 (YVVI…NLLF), 224 to 244 (ISSA…LIFM), 274 to 294 (IVVL…FYII), 305 to 325 (AIYL…ANWC), 331 to 351 (MGPF…SAII), 362 to 382 (FLPF…LFGW), 388 to 408 (IILI…VPAL), 418 to 438 (FALS…YALA), and 447 to 467 (ETFT…PPIL).

Belongs to the monovalent cation:proton antiporter 2 (CPA2) transporter (TC 2.A.37) family. CHX (TC 2.A.37.4) subfamily.

It is found in the membrane. In terms of biological role, may operate as a cation/H(+) antiporter. The sequence is that of Cation/H(+) antiporter 3 (CHX3) from Arabidopsis thaliana (Mouse-ear cress).